We begin with the raw amino-acid sequence, 250 residues long: Probable transcriptional regulatory protein SACE_2018 (250 aa).

This sequence belongs to the TACO1 family.

It is found in the cytoplasm. This Saccharopolyspora erythraea (strain ATCC 11635 / DSM 40517 / JCM 4748 / NBRC 13426 / NCIMB 8594 / NRRL 2338) protein is Probable transcriptional regulatory protein SACE_2018.